The primary structure comprises 460 residues: NADH-ubiquinone oxidoreductase chain 4 (460 aa).

A run of 13 helical transmembrane segments spans residues 20 to 42 (AKWL…LSWL), 61 to 81 (PLST…VLAS), 94 to 113 (RTYI…AFGA), 117 to 139 (IMFY…RWGN), 148 to 168 (TYFL…LLLL), 195 to 215 (LWWA…GVHL), 225 to 245 (PIAG…YGMM), 258 to 278 (LAYP…SICL), 285 to 304 (SLIA…GILI), 308 to 330 (WGFT…LFCL), 351 to 371 (MILP…LALP), 394 to 414 (LLLT…LFLM), and 436 to 456 (LLIT…ELMW).

Belongs to the complex I subunit 4 family.

Its subcellular location is the mitochondrion membrane. The enzyme catalyses a ubiquinone + NADH + 5 H(+)(in) = a ubiquinol + NAD(+) + 4 H(+)(out). Core subunit of the mitochondrial membrane respiratory chain NADH dehydrogenase (Complex I) that is believed to belong to the minimal assembly required for catalysis. Complex I functions in the transfer of electrons from NADH to the respiratory chain. The immediate electron acceptor for the enzyme is believed to be ubiquinone. The polypeptide is NADH-ubiquinone oxidoreductase chain 4 (MT-ND4) (Salmo salar (Atlantic salmon)).